Consider the following 468-residue polypeptide: ATP synthase subunit beta (468 aa).

Residue 155-162 coordinates ATP; that stretch reads GGAGVGKT.

The protein belongs to the ATPase alpha/beta chains family. F-type ATPases have 2 components, CF(1) - the catalytic core - and CF(0) - the membrane proton channel. CF(1) has five subunits: alpha(3), beta(3), gamma(1), delta(1), epsilon(1). CF(0) has three main subunits: a(1), b(2) and c(9-12). The alpha and beta chains form an alternating ring which encloses part of the gamma chain. CF(1) is attached to CF(0) by a central stalk formed by the gamma and epsilon chains, while a peripheral stalk is formed by the delta and b chains.

It is found in the cell membrane. It carries out the reaction ATP + H2O + 4 H(+)(in) = ADP + phosphate + 5 H(+)(out). Its function is as follows. Produces ATP from ADP in the presence of a proton gradient across the membrane. The catalytic sites are hosted primarily by the beta subunits. The sequence is that of ATP synthase subunit beta from Streptococcus sanguinis (strain SK36).